The sequence spans 163 residues: Phosphopantetheine adenylyltransferase (163 aa).

Ser10 is a substrate binding site. Residues Ser10 to Phe11 and His18 contribute to the ATP site. Residues Lys42, Leu74, and Arg88 each contribute to the substrate site. ATP contacts are provided by residues Gly89–Arg91, Glu99, and Tyr124–Ser130.

This sequence belongs to the bacterial CoaD family. Homohexamer. Mg(2+) is required as a cofactor.

Its subcellular location is the cytoplasm. The enzyme catalyses (R)-4'-phosphopantetheine + ATP + H(+) = 3'-dephospho-CoA + diphosphate. It participates in cofactor biosynthesis; coenzyme A biosynthesis; CoA from (R)-pantothenate: step 4/5. Functionally, reversibly transfers an adenylyl group from ATP to 4'-phosphopantetheine, yielding dephospho-CoA (dPCoA) and pyrophosphate. The chain is Phosphopantetheine adenylyltransferase from Bacillus cereus (strain G9842).